A 618-amino-acid polypeptide reads, in one-letter code: Chaperone protein DnaK (618 aa).

T175 is modified (phosphothreonine; by autocatalysis). The disordered stretch occupies residues 579 to 618 (GAPGAEGFDSNMAGEANAGQNANNDDNVVDADYKVEDDEK). Low complexity predominate over residues 591-604 (AGEANAGQNANNDD).

Belongs to the heat shock protein 70 family.

Functionally, acts as a chaperone. This chain is Chaperone protein DnaK, found in Clostridium tetani (strain Massachusetts / E88).